The sequence spans 378 residues: Alginate lyase (378 aa).

The signal sequence occupies residues 1 to 28 (MQTPKLIRPTLLSMAIVSSMAWATGASA). Substrate is bound by residues 67–68 (SK), 140–141 (HT), and Tyr258.

The protein belongs to the polysaccharide lyase 5 family.

Its subcellular location is the periplasm. The catalysed reaction is Eliminative cleavage of alginate to give oligosaccharides with 4-deoxy-alpha-L-erythro-hex-4-enuronosyl groups at their non-reducing ends and beta-D-mannuronate at their reducing end.. Catalyzes the depolymerization of alginate by cleaving the beta-1,4 glycosidic bond between two adjacent sugar residues via a beta-elimination mechanism. May serve to degrade mislocalized alginate that is trapped in the periplasmic space. In Pseudomonas syringae pv. tomato (strain ATCC BAA-871 / DC3000), this protein is Alginate lyase.